The chain runs to 135 residues: Fatty acid-binding protein 5 (135 aa).

N-acetylalanine is present on A2. Position 17 is an N6-acetyllysine (K17). A Nuclear localization signal motif is present at residues 24–34; sequence KELGVGIALRK. C43 and R109 together coordinate N-eicosanoyl ethanolamine. A disulfide bond links C120 and C127. 129–131 lines the (9Z,12Z)-octadecadienoate pocket; it reads RIY. Residue Y131 coordinates N-eicosanoyl ethanolamine. A hexadecanoate-binding site is contributed by Y131. The residue at position 131 (Y131) is a Phosphotyrosine.

Belongs to the calycin superfamily. Fatty-acid binding protein (FABP) family. As to quaternary structure, monomer. Homodimer. As to expression, keratinocytes; highly expressed in psoriatic skin. Expressed in brain gray matter.

Its subcellular location is the cytoplasm. The protein resides in the nucleus. It is found in the synapse. The protein localises to the postsynaptic density. It localises to the secreted. The catalysed reaction is hexadecanoate(out) = hexadecanoate(in). It catalyses the reaction (9Z,12Z)-octadecadienoate(out) = (9Z,12Z)-octadecadienoate(in). It carries out the reaction (9Z)-octadecenoate(out) = (9Z)-octadecenoate(in). Intracellular carrier for long-chain fatty acids and related active lipids, such as endocannabinoids, that regulate the metabolism and actions of the ligands they bind. In addition to the cytosolic transport, selectively delivers specific fatty acids from the cytosol to the nucleus, wherein they activate nuclear receptors. Delivers retinoic acid to the nuclear receptor peroxisome proliferator-activated receptor delta; which promotes proliferation and survival. May also serve as a synaptic carrier of endocannabinoid at central synapses and thus controls retrograde endocannabinoid signaling. Modulates inflammation by regulating PTGES induction via NF-kappa-B activation, and prostaglandin E2 (PGE2) biosynthesis during inflammation. May be involved in keratinocyte differentiation. The protein is Fatty acid-binding protein 5 of Homo sapiens (Human).